We begin with the raw amino-acid sequence, 254 residues long: MSPSTGVELYLDLLKRTVSNFIYQDATHVAGLITEAAFVEEARESGEDYPTVAHTMIGMKRLNNLQHCVESALRDGVPGDVLETGVWRGGACIFARGILKAYDVRDRTVWVADSFQGFPKITDDDHPMDAEMNLHQYNEAVDLPTSLATVQRNFSRYGLLDDQVRFLPGWFKDTMPTAPFERLAVLRMDGDSYGATMDVLTHAYPRLSPGGFAIIDDYCIPACREAVHEYRDRHGISDEIVEIDRQGVYWRRSA.

S-adenosyl-L-methionine-binding positions include 55–56 (TM), 83–87 (ETGVW), 113–117 (DSFQG), Phe-171, and 189–190 (DG). 3 residues coordinate Mg(2+): Asp-189, Asp-216, and Asp-217.

The protein belongs to the methyltransferase TylF/MycF family. Mg(2+) is required as a cofactor.

The enzyme catalyses mycinamicin III + S-adenosyl-L-methionine = mycinamicin IV + S-adenosyl-L-homocysteine + H(+). The protein operates within antibiotic biosynthesis; mycinamicin biosynthesis. Its function is as follows. O-methyltransferase that catalyzes the conversion of mycinamicin III to mycinamicin IV in the biosynthesis of mycinamicin, a 16-membered macrolide antibiotic. This Micromonospora griseorubida protein is Mycinamicin III 3''-O-methyltransferase (mycF).